A 113-amino-acid polypeptide reads, in one-letter code: U11-theraphotoxin-Hhn1a (113 aa).

Residues Met-1 to Ala-21 form the signal peptide. A propeptide spanning residues Asp-22–Arg-74 is cleaved from the precursor. Positions Glu-61–Asp-83 are disordered. Cystine bridges form between Cys-75–Cys-90, Cys-82–Cys-95, and Cys-89–Cys-110.

This sequence belongs to the neurotoxin 14 (magi-1) family. 01 (HNTX-16) subfamily. Expressed by the venom gland.

It is found in the secreted. Its function is as follows. Probable ion channel inhibitor. The polypeptide is U11-theraphotoxin-Hhn1a (Cyriopagopus hainanus (Chinese bird spider)).